Reading from the N-terminus, the 324-residue chain is 3'-5' exoribonuclease YhaM (324 aa).

The HD domain maps to 163–279 (HVVSMLELAK…LHYIDNLDAK (117 aa)).

It belongs to the YhaM family.

Its function is as follows. Shows a 3'-5' exoribonuclease activity. The protein is 3'-5' exoribonuclease YhaM of Geobacillus sp. (strain WCH70).